The primary structure comprises 296 residues: Methylsterol monooxygenase erg25B (296 aa).

3 helical membrane-spanning segments follow: residues Ile50 to Ile70, Phe98 to Ala118, and Thr125 to Leu145. Residues Ala140–Thr276 form the Fatty acid hydroxylase domain. A Histidine box-1 motif is present at residues His154–His158. A Histidine box-2 motif is present at residues His167 to His171. A helical transmembrane segment spans residues Ile201–Leu221. A Histidine box-3 motif is present at residues His251–Glu257.

Belongs to the sterol desaturase family. Fe cation is required as a cofactor.

It localises to the endoplasmic reticulum membrane. The protein operates within steroid metabolism; ergosterol biosynthesis. Sterol-C4-methyl oxidase; part of the third module of ergosterol biosynthesis pathway that includes the late steps of the pathway. Erg25B is a catalytic component of the C-4 demethylation complex that catalyzes the conversion of 4,4-dimethylfecosterol into fecosterol via 4-methylfecosterol. The third module or late pathway involves the ergosterol synthesis itself through consecutive reactions that mainly occur in the endoplasmic reticulum (ER) membrane. Firstly, the squalene synthase erg9 catalyzes the condensation of 2 farnesyl pyrophosphate moieties to form squalene, which is the precursor of all steroids. Squalene synthase is crucial for balancing the incorporation of farnesyl diphosphate (FPP) into sterol and nonsterol isoprene synthesis. Secondly, squalene is converted into lanosterol by the consecutive action of the squalene epoxidase erg1 and the lanosterol synthase erg7. Then, the delta(24)-sterol C-methyltransferase erg6 methylates lanosterol at C-24 to produce eburicol. Eburicol is the substrate of the sterol 14-alpha demethylase encoded by cyp51A and cyp51B, to yield 4,4,24-trimethyl ergosta-8,14,24(28)-trienol. The C-14 reductase erg24 then reduces the C14=C15 double bond which leads to 4,4-dimethylfecosterol. A sequence of further demethylations at C-4, involving the C-4 demethylation complex containing the C-4 methylsterol oxidases erg25A or erg25B, the sterol-4-alpha-carboxylate 3-dehydrogenase erg26 and the 3-keto-steroid reductase erg27, leads to the production of fecosterol via 4-methylfecosterol. The C-8 sterol isomerase erg2 then catalyzes the reaction which results in unsaturation at C-7 in the B ring of sterols and thus converts fecosterol to episterol. The sterol-C5-desaturase erg3B then catalyzes the introduction of a C-5 double bond in the B ring to produce 5-dehydroepisterol. The 2 other sterol-C5-desaturases, erg3A and erg3C, seem to be less important in ergosterol biosynthesis. The C-22 sterol desaturase erg5 further converts 5-dehydroepisterol into ergosta-5,7,22,24(28)-tetraen-3beta-ol by forming the C-22(23) double bond in the sterol side chain. Finally, ergosta-5,7,22,24(28)-tetraen-3beta-ol is substrate of the C-24(28) sterol reductases erg4A and erg4B to produce ergosterol. Possible alternative sterol biosynthetic pathways might exist from fecosterol to ergosterol, depending on the activities of the erg3 isoforms. This is Methylsterol monooxygenase erg25B from Aspergillus fumigatus (strain ATCC MYA-4609 / CBS 101355 / FGSC A1100 / Af293) (Neosartorya fumigata).